Here is a 94-residue protein sequence, read N- to C-terminus: Long neurotoxin-like OH-31 (94 aa).

The N-terminal stretch at 1–19 is a signal peptide; it reads MKTLLLTLVVVTILCLDLG. Disulfide bonds link C35-C55, C37-C66, C70-C81, and C82-C87.

Belongs to the three-finger toxin family. Long-chain subfamily. Type II alpha-neurotoxin sub-subfamily. In terms of tissue distribution, expressed by the venom gland.

Its subcellular location is the secreted. In terms of biological role, binds with high affinity to muscular nicotinic acetylcholine receptors (nAChRs), whereas it binds with a low affinity to neuronal alpha-7/CHRNA7 nAChRs. The sequence is that of Long neurotoxin-like OH-31 from Ophiophagus hannah (King cobra).